Consider the following 833-residue polypeptide: Copper-exporting P-type ATPase (833 aa).

HMA domains follow at residues 3 to 64 (QTID…YGAT) and 98 to 161 (ESQQ…YGAE). Residues cysteine 14, cysteine 17, cysteine 109, and cysteine 112 each coordinate Cu(+). Helical transmembrane passes span 186–206 (WQAI…MIGD), 217–237 (LWLA…GHFY), 253–273 (TLVA…NLWP), 283–303 (LYYE…MLEA), 437–457 (AVFV…WYFF), and 463–483 (IVYT…CALG). Catalysis depends on aspartate 522, which acts as the 4-aspartylphosphate intermediate. Mg(2+)-binding residues include aspartate 719 and aspartate 723. 2 helical membrane-spanning segments follow: residues 778-798 (LGAF…LWPF) and 800-820 (GTLL…ITVV).

It belongs to the cation transport ATPase (P-type) (TC 3.A.3) family. Type IB subfamily.

It localises to the cell inner membrane. It is found in the cytoplasm. It catalyses the reaction Cu(+)(in) + ATP + H2O = Cu(+)(out) + ADP + phosphate + H(+). Involved in Cu(+) export. Essential for copper tolerance under both aerobic and anaerobic conditions. In terms of biological role, probably also encodes a cytoplasmic copper chaperone CopA(Z) that is produced by programmed ribosomal frameshifting. The polypeptide is Copper-exporting P-type ATPase (copA) (Salmonella typhimurium (strain LT2 / SGSC1412 / ATCC 700720)).